The following is a 273-amino-acid chain: NH(3)-dependent NAD(+) synthetase (273 aa).

Position 47–54 (47–54) interacts with ATP; it reads GISGGQDS. Residue Asp-53 coordinates Mg(2+). Residue Arg-139 participates in deamido-NAD(+) binding. Position 159 (Thr-159) interacts with ATP. Glu-164 contributes to the Mg(2+) binding site. Lys-172 and Asp-179 together coordinate deamido-NAD(+). 2 residues coordinate ATP: Lys-188 and Thr-210. 259–260 contributes to the deamido-NAD(+) binding site; it reads HK.

Belongs to the NAD synthetase family. In terms of assembly, homodimer.

It catalyses the reaction deamido-NAD(+) + NH4(+) + ATP = AMP + diphosphate + NAD(+) + H(+). It functions in the pathway cofactor biosynthesis; NAD(+) biosynthesis; NAD(+) from deamido-NAD(+) (ammonia route): step 1/1. Its function is as follows. Catalyzes the ATP-dependent amidation of deamido-NAD to form NAD. Uses ammonia as a nitrogen source. This is NH(3)-dependent NAD(+) synthetase from Staphylococcus aureus (strain MRSA252).